The chain runs to 340 residues: MARDEVRRILPADIKREVLIKDENAETNPDWGFPPEKRPIEMHIQFGVINLDKPPGPTSHEVVAWIKKILNLEKAGHGGTLDPKVSGVLPVALEKATRVVQALLPAGKEYVALMHLHGDVPEDKIIQVMKEFEGEIIQRPPLRSAVKRRLRTRKVYYIEVLEIEGRDVLFRVGVEAGTYIRSLIHHIGLALGVGAHMSELRRTRSGPFKEDETLITLHDLVDYYYFWKEDGIEEYFRKAIQPMEKAVEHLPKVWIKDSAVAAVTHGADLAVPGIAKLHAGIKRGDLVAIMTLKDELVALGKAMMTSQEMLEKTKGIAVDVEKVFMPRDWYPKLWEKRDRS.

Asp-82 acts as the Nucleophile in catalysis. Residues 250-325 form the PUA domain; sequence LPKVWIKDSA…IAVDVEKVFM (76 aa).

The protein belongs to the pseudouridine synthase TruB family. Type 2 subfamily.

It catalyses the reaction uridine(55) in tRNA = pseudouridine(55) in tRNA. In terms of biological role, could be responsible for synthesis of pseudouridine from uracil-55 in the psi GC loop of transfer RNAs. This Pyrococcus furiosus (strain ATCC 43587 / DSM 3638 / JCM 8422 / Vc1) protein is Probable tRNA pseudouridine synthase B.